A 520-amino-acid chain; its full sequence is MAYFNQHQSMISKRYLTFFSKSKKKKPFSAGQLIGLILGPLLFLLTLLFFHPQDLPWKGVYVLAITLWIATWWITEAIPIAATSLLPIVLLPLGHILTPEQVSSEYGNDIIFLFLGGFILAIAMERWNLHTRVALTIINLIGASTSKILLGFMVATGFLSMFVSNTAAVMIMIPIGLAIIKEAHDLQEANTNQTSIQKFEKSLVLAIGYAGTIGGLGTLIGTPPLIILKGQYMQHFGYEISFAKWMIVGIPTVIVLLGITWLYLRYVAFRHDLKYLPGGQTLIKQKLDELGKMKYEEKVVQTIFVLASLLWITREFLLKKWEVTSSVADGTIAIFISILLFIIPAKNTEKHRRIIDWEVAKELPWGVLILFGGGLALAKGISESGLAKWLGEQLKSLNGVSPILIVIVITIFVLFLTEVTSNTATATMILPILATLSVAVGVHPLLLMAPAAMAANCAYMLPVGTPPNAIIFGSGKISIKQMASVGFWVNLISAIIIILVVYYVMPIVLGIDINQPLPLK.

Transmembrane regions (helical) follow at residues 30 to 50 (AGQLIGLILGPLLFLLTLLFF), 55 to 75 (LPWKGVYVLAITLWIATWWIT), 77 to 97 (AIPIAATSLLPIVLLPLGHIL), 104 to 124 (SEYGNDIIFLFLGGFILAIAM), 160 to 180 (SMFVSNTAAVMIMIPIGLAII), 207 to 227 (IGYAGTIGGLGTLIGTPPLII), 242 to 262 (FAKWMIVGIPTVIVLLGITWL), 298 to 318 (KVVQTIFVLASLLWITREFLL), 323 to 343 (VTSSVADGTIAIFISILLFII), 362 to 382 (ELPWGVLILFGGGLALAKGIS), 399 to 419 (GVSPILIVIVITIFVLFLTEV), 428 to 448 (MILPILATLSVAVGVHPLLLM), 452 to 472 (AMAANCAYMLPVGTPPNAIIF), and 491 to 511 (LISAIIIILVVYYVMPIVLGI).

This sequence belongs to the SLC13A/DASS transporter (TC 2.A.47) family. NADC subfamily.

It localises to the cell membrane. In terms of biological role, mediates the transport of the dicarboxylates fumarate, malate, and succinate across the cytoplasmic membrane via a Na(+)-electrochemical gradient. The sequence is that of Sodium-dependent dicarboxylate transporter SdcS (sdcS) from Staphylococcus aureus (strain USA300).